The following is a 199-amino-acid chain: Glycerol-3-phosphate acyltransferase (199 aa).

Helical transmembrane passes span 4-24 (FALF…AILI), 56-76 (LAVL…GYYL), 80-100 (QFEL…PIFF), 115-135 (IAPI…FVFL), and 154-176 (YVWW…LIYR).

It belongs to the PlsY family. In terms of assembly, probably interacts with PlsX.

It is found in the cell inner membrane. It carries out the reaction an acyl phosphate + sn-glycerol 3-phosphate = a 1-acyl-sn-glycero-3-phosphate + phosphate. The protein operates within lipid metabolism; phospholipid metabolism. Its function is as follows. Catalyzes the transfer of an acyl group from acyl-phosphate (acyl-PO(4)) to glycerol-3-phosphate (G3P) to form lysophosphatidic acid (LPA). This enzyme utilizes acyl-phosphate as fatty acyl donor, but not acyl-CoA or acyl-ACP. This is Glycerol-3-phosphate acyltransferase from Haemophilus influenzae (strain PittGG).